A 542-amino-acid polypeptide reads, in one-letter code: Thermosome subunit (542 aa).

Belongs to the TCP-1 chaperonin family. Forms an oligomeric complex of eight-membered rings.

Its function is as follows. Molecular chaperone; binds unfolded polypeptides in vitro, and has a weak ATPase activity. This Methanocaldococcus jannaschii (strain ATCC 43067 / DSM 2661 / JAL-1 / JCM 10045 / NBRC 100440) (Methanococcus jannaschii) protein is Thermosome subunit (ths).